Here is a 242-residue protein sequence, read N- to C-terminus: MLIDKNELEQLKVKLHSSEVIYQWDSVAYGERRSEIFRVFGAISAGIVPLWPFIFFADIQFNSKEFWGFICFSLAGMAAARYLFMPDHRYCYSLTQAGIYYTDQEVIPDAAYTFVRGFAWVGIAVCLLALAVVGPLAFVGAGGFALLAFGLTNFHPTVHKKEVYFADQLIVFDPIKEKMVDLNTDSTDEPWFDRRLFFSSLDEKTHFIELVKSIHNNVDYLPLQRVNDQYKHPIFNQELKEE.

The next 3 helical transmembrane spans lie at 39–59 (VFGA…FADI), 66–86 (FWGF…LFMP), and 118–138 (FAWV…PLAF).

It localises to the host membrane. Functionally, immunity protein that plays a role in preventing early activation of toxin VasX. In Vibrio cholerae serotype O1 (strain ATCC 39315 / El Tor Inaba N16961), this protein is Immunity protein TsiV2.